Consider the following 217-residue polypeptide: Killer cell lectin-like receptor subfamily B member 1F (217 aa).

At 1 to 45 (MDTSRVYGNVKTFRSPGHKQASFPSLSTDACRCPHWHHLALKLGC) the chain is on the cytoplasmic side. Residues 31–34 (CRCP) carry the LCK-binding motif motif. The helical; Signal-anchor for type II membrane protein transmembrane segment at 46–66 (ATLILLLLTLIGLSVFVRFLV) threads the bilayer. Residues 67–217 (QKPLIEKCSM…WICQKTLKHV (151 aa)) lie on the Extracellular side of the membrane. The C-type lectin domain occupies 101-211 (HRNKCLIISQ…CSSDNHWICQ (111 aa)). Cystine bridges form between Cys-122/Cys-210 and Cys-189/Cys-202.

As to expression, expressed in natural killer cells and a subset of T-cells.

The protein localises to the membrane. Its function is as follows. Binds CLEC2I/Clr-g leading to activation of natural killer cells or stimulation of IL-2 production and proliferation of T-cells in response to antigen stimulation. May contribute to the formation of the immunological synapse between T-cells and antigen-presenting dendritic cells. The sequence is that of Killer cell lectin-like receptor subfamily B member 1F from Rattus norvegicus (Rat).